A 373-amino-acid polypeptide reads, in one-letter code: 4-hydroxy-3-methylbut-2-en-1-yl diphosphate synthase (flavodoxin) (373 aa).

[4Fe-4S] cluster is bound by residues cysteine 270, cysteine 273, cysteine 305, and glutamate 312.

It belongs to the IspG family. [4Fe-4S] cluster is required as a cofactor.

The enzyme catalyses (2E)-4-hydroxy-3-methylbut-2-enyl diphosphate + oxidized [flavodoxin] + H2O + 2 H(+) = 2-C-methyl-D-erythritol 2,4-cyclic diphosphate + reduced [flavodoxin]. It participates in isoprenoid biosynthesis; isopentenyl diphosphate biosynthesis via DXP pathway; isopentenyl diphosphate from 1-deoxy-D-xylulose 5-phosphate: step 5/6. In terms of biological role, converts 2C-methyl-D-erythritol 2,4-cyclodiphosphate (ME-2,4cPP) into 1-hydroxy-2-methyl-2-(E)-butenyl 4-diphosphate. In Proteus mirabilis (strain HI4320), this protein is 4-hydroxy-3-methylbut-2-en-1-yl diphosphate synthase (flavodoxin).